Reading from the N-terminus, the 124-residue chain is Large ribosomal subunit protein bL12 (124 aa).

It belongs to the bacterial ribosomal protein bL12 family. In terms of assembly, homodimer. Part of the ribosomal stalk of the 50S ribosomal subunit. Forms a multimeric L10(L12)X complex, where L10 forms an elongated spine to which 2 to 4 L12 dimers bind in a sequential fashion. Binds GTP-bound translation factors.

In terms of biological role, forms part of the ribosomal stalk which helps the ribosome interact with GTP-bound translation factors. Is thus essential for accurate translation. The chain is Large ribosomal subunit protein bL12 from Desulforamulus reducens (strain ATCC BAA-1160 / DSM 100696 / MI-1) (Desulfotomaculum reducens).